Here is a 261-residue protein sequence, read N- to C-terminus: Cytochrome c oxidase subunit 3 (261 aa).

Topologically, residues 1–15 (MTHQTHSYHMVNPSP) are mitochondrial matrix. Residues 16 to 34 (WPLTGALSALLMTSGLIMW) traverse the membrane as a helical segment. Topologically, residues 35–40 (FHFNSM) are mitochondrial intermembrane. Residues 41-66 (ILLTLGLSTNILTMYQWWRDIIREST) traverse the membrane as a helical segment. The Mitochondrial matrix portion of the chain corresponds to 67–72 (FQGHHT). A helical membrane pass occupies residues 73-105 (PTVQKGLRYGMILFIVSEVLFFTGFFWAFYHSS). Topologically, residues 106–128 (LAPTPELGGCWPPTGIHPLNPLE) are mitochondrial intermembrane. Residues 129–152 (VPLLNTSVLLASGVSITWAHHSLM) traverse the membrane as a helical segment. The Mitochondrial matrix portion of the chain corresponds to 153–155 (EGN). Residues 156-183 (RKHMLQALFITIALGLYFTLLQASEYYE) form a helical membrane-spanning segment. The Mitochondrial intermembrane segment spans residues 184–190 (APFTISD). A helical membrane pass occupies residues 191–223 (GIYGSTFFVATGFHGLHVIIGSTFLIVCFLRQV). Residues 224–232 (KFHFTSNHH) are Mitochondrial matrix-facing. Residues 233–256 (FGFERAAWYWHFVDVVWLFLYVSI) traverse the membrane as a helical segment. The Mitochondrial intermembrane portion of the chain corresponds to 257 to 261 (YWWGS).

Belongs to the cytochrome c oxidase subunit 3 family. In terms of assembly, component of the cytochrome c oxidase (complex IV, CIV), a multisubunit enzyme composed of 14 subunits. The complex is composed of a catalytic core of 3 subunits MT-CO1, MT-CO2 and MT-CO3, encoded in the mitochondrial DNA, and 11 supernumerary subunits COX4I, COX5A, COX5B, COX6A, COX6B, COX6C, COX7A, COX7B, COX7C, COX8 and NDUFA4, which are encoded in the nuclear genome. The complex exists as a monomer or a dimer and forms supercomplexes (SCs) in the inner mitochondrial membrane with NADH-ubiquinone oxidoreductase (complex I, CI) and ubiquinol-cytochrome c oxidoreductase (cytochrome b-c1 complex, complex III, CIII), resulting in different assemblies (supercomplex SCI(1)III(2)IV(1) and megacomplex MCI(2)III(2)IV(2)).

The protein resides in the mitochondrion inner membrane. The catalysed reaction is 4 Fe(II)-[cytochrome c] + O2 + 8 H(+)(in) = 4 Fe(III)-[cytochrome c] + 2 H2O + 4 H(+)(out). Component of the cytochrome c oxidase, the last enzyme in the mitochondrial electron transport chain which drives oxidative phosphorylation. The respiratory chain contains 3 multisubunit complexes succinate dehydrogenase (complex II, CII), ubiquinol-cytochrome c oxidoreductase (cytochrome b-c1 complex, complex III, CIII) and cytochrome c oxidase (complex IV, CIV), that cooperate to transfer electrons derived from NADH and succinate to molecular oxygen, creating an electrochemical gradient over the inner membrane that drives transmembrane transport and the ATP synthase. Cytochrome c oxidase is the component of the respiratory chain that catalyzes the reduction of oxygen to water. Electrons originating from reduced cytochrome c in the intermembrane space (IMS) are transferred via the dinuclear copper A center (CU(A)) of subunit 2 and heme A of subunit 1 to the active site in subunit 1, a binuclear center (BNC) formed by heme A3 and copper B (CU(B)). The BNC reduces molecular oxygen to 2 water molecules using 4 electrons from cytochrome c in the IMS and 4 protons from the mitochondrial matrix. This chain is Cytochrome c oxidase subunit 3 (MT-CO3), found in Balaenoptera musculus (Blue whale).